Here is a 397-residue protein sequence, read N- to C-terminus: N-acetyllactosaminide beta-1,3-N-acetylglucosaminyltransferase 2 (397 aa).

Topologically, residues 1–7 (MSVGRRR) are cytoplasmic. A helical; Signal-anchor for type II membrane protein membrane pass occupies residues 8-28 (VKLLGILMMANVFIYLIVEVS). The Lumenal segment spans residues 29 to 325 (KNSSQDKNGK…ALRLYSATSR (297 aa)). N-linked (GlcNAc...) asparagine glycans are attached at residues Asn30, Asn79, Asn89, Asn127, Asn173, and Asn219.

Belongs to the glycosyltransferase 31 family. In terms of assembly, interacts with B3GNT8; this interaction greatly increases B3GNT2 catalytic activity, independently of B3GNT8 enzymatic activity. Mn(2+) is required as a cofactor. As to expression, expressed in heart, brain, lung, kidney and testis and, to a lesser extent, in liver and skeletal muscle. No expression in spleen.

It localises to the golgi apparatus membrane. The enzyme catalyses a beta-D-galactosyl-(1-&gt;4)-N-acetyl-beta-D-glucosaminyl derivative + UDP-N-acetyl-alpha-D-glucosamine = an N-acetyl-beta-D-glucosaminyl-(1-&gt;3)-beta-D-galactosyl-(1-&gt;4)-N-acetyl-beta-D-glucosaminyl derivative + UDP + H(+). It participates in protein modification; protein glycosylation. Its function is as follows. Beta-1,3-N-acetylglucosaminyltransferase involved in the synthesis of poly-N-acetyllactosamine. Catalyzes the initiation and elongation of poly-N-acetyllactosamine chains. Probably constitutes the main polylactosamine synthase. In Mus musculus (Mouse), this protein is N-acetyllactosaminide beta-1,3-N-acetylglucosaminyltransferase 2 (B3GNT2).